A 337-amino-acid polypeptide reads, in one-letter code: MNGLGGLNKSPEGVVIGLVQLQLPNVVTRADLARQTERIVWMVGKARRNLSTMDLVVFPEYSLHGLSMDTNPEIMCRLDGPEVTAFKKACVDNRIWGCFSIMEFNPHGNPYNSGLIIDDHGEIKLYYRKLHPWIPVEPWEPGDIGIPVIEGPKGARIALIICHDGMFPEMARECAYKGAEIMIRTAGYTAPIREAWRFTNQANSFQNLMVTANVCMCGSDGSFDSMGEGMIVNFDGAVLAHGTTGRADEIITAEVRPDLVREARINWGVENNIYQLWHRGYVAVKGGAMDCPYTFMQDMVAGTFRLPWEDQVKVTDGSSCGFPAPTRMYGKTAKAAE.

Residues 14–257 (VVIGLVQLQL…DEIITAEVRP (244 aa)) form the CN hydrolase domain. Glu60 functions as the Proton acceptor in the catalytic mechanism. Residue Lys129 is the Proton donor of the active site. The active-site Nucleophile is Cys162.

It belongs to the carbon-nitrogen hydrolase superfamily. Aliphatic amidase family.

The enzyme catalyses formamide + H2O = formate + NH4(+). Its function is as follows. Is an aliphatic amidase with a restricted substrate specificity, as it only hydrolyzes formamide. In Bradyrhizobium diazoefficiens (strain JCM 10833 / BCRC 13528 / IAM 13628 / NBRC 14792 / USDA 110), this protein is Formamidase.